Consider the following 547-residue polypeptide: Chaperonin GroEL (547 aa).

Residues 30-33 (TLGP), Lys51, 87-91 (DGTTT), Gly415, and Asp496 each bind ATP. Positions 528-547 (KEEPMPMRGSGMGGMGGMDF) are disordered. Gly residues predominate over residues 537-547 (SGMGGMGGMDF).

The protein belongs to the chaperonin (HSP60) family. Forms a cylinder of 14 subunits composed of two heptameric rings stacked back-to-back. Interacts with the co-chaperonin GroES.

It localises to the cytoplasm. It carries out the reaction ATP + H2O + a folded polypeptide = ADP + phosphate + an unfolded polypeptide.. Functionally, together with its co-chaperonin GroES, plays an essential role in assisting protein folding. The GroEL-GroES system forms a nano-cage that allows encapsulation of the non-native substrate proteins and provides a physical environment optimized to promote and accelerate protein folding. The protein is Chaperonin GroEL of Rickettsia canadensis (strain McKiel).